Here is a 709-residue protein sequence, read N- to C-terminus: Cell adhesion molecule CEACAM3 (709 aa).

An N-terminal signal peptide occupies residues 1-34 (MELSSVLPCKRCTPWRGLLLTASLLTCWLLPTTA). 5 consecutive Ig-like V-type domains span residues 35-142 (QVSI…HVYF), 155-262 (QLSI…QVDT), 275-382 (QLTV…QVNT), 393-500 (LLTI…SVHT), and 509-616 (QLVI…HIYK). N-linked (GlcNAc...) asparagine glycosylation is found at N73, N86, N103, N110, N133, N207, N224, N231, N327, N344, N351, N381, N462, N561, N578, and N585. Residues 631–695 (RVKSSVVLTC…YRCEVSNPVS (65 aa)) enclose the Ig-like C2-type domain.

The protein belongs to the immunoglobulin superfamily. CEA family. Expression detected only in placenta.

Functionally, possibly involved in cell adhesion. The chain is Cell adhesion molecule CEACAM3 from Rattus norvegicus (Rat).